The primary structure comprises 295 residues: NAD kinase (295 aa).

D73 functions as the Proton acceptor in the catalytic mechanism. Residues 73-74, R78, 146-147, K157, R174, D176, and 187-192 each bind NAD(+); these read DG, NE, and TAYSLS.

This sequence belongs to the NAD kinase family. A divalent metal cation serves as cofactor.

The protein resides in the cytoplasm. The catalysed reaction is NAD(+) + ATP = ADP + NADP(+) + H(+). Involved in the regulation of the intracellular balance of NAD and NADP, and is a key enzyme in the biosynthesis of NADP. Catalyzes specifically the phosphorylation on 2'-hydroxyl of the adenosine moiety of NAD to yield NADP. In Wigglesworthia glossinidia brevipalpis, this protein is NAD kinase.